The sequence spans 370 residues: Subtilisin-like protease (370 aa).

Residues M1–T17 form the signal peptide. Catalysis depends on charge relay system residues D13, H35, and S190. The Peptidase S8 domain occupies G18–E261. A P/Homo B domain is found at R240 to R370.

The protein belongs to the peptidase S8 family.

This is Subtilisin-like protease (ORF47) from Ictalurid herpesvirus 1 (strain Auburn) (IcHV-1).